The chain runs to 356 residues: 1-deoxy-D-xylulose 5-phosphate reductoisomerase (356 aa).

NADPH contacts are provided by Thr-7, Gly-8, Ser-9, Ile-10, Gly-31, Asn-33, and Asn-111. Lys-112 is a binding site for 1-deoxy-D-xylulose 5-phosphate. Glu-113 provides a ligand contact to NADPH. Asp-131 is a Mn(2+) binding site. Positions 132, 133, 155, and 178 each coordinate 1-deoxy-D-xylulose 5-phosphate. Glu-133 contributes to the Mn(2+) binding site. Position 184 (Gly-184) interacts with NADPH. 1-deoxy-D-xylulose 5-phosphate-binding residues include Ser-191, Asn-196, Lys-197, and Glu-200. Glu-200 is a binding site for Mn(2+).

It belongs to the DXR family. Requires Mg(2+) as cofactor. It depends on Mn(2+) as a cofactor.

The enzyme catalyses 2-C-methyl-D-erythritol 4-phosphate + NADP(+) = 1-deoxy-D-xylulose 5-phosphate + NADPH + H(+). It participates in isoprenoid biosynthesis; isopentenyl diphosphate biosynthesis via DXP pathway; isopentenyl diphosphate from 1-deoxy-D-xylulose 5-phosphate: step 1/6. Its function is as follows. Catalyzes the NADPH-dependent rearrangement and reduction of 1-deoxy-D-xylulose-5-phosphate (DXP) to 2-C-methyl-D-erythritol 4-phosphate (MEP). This chain is 1-deoxy-D-xylulose 5-phosphate reductoisomerase, found in Campylobacter jejuni subsp. doylei (strain ATCC BAA-1458 / RM4099 / 269.97).